The primary structure comprises 793 residues: Plakophilin-3 (793 aa).

Residues 56-82 (QLGQQPRHNGPAEPDGAAEAARGASRA) form a disordered region. Low complexity predominate over residues 66 to 82 (PAEPDGAAEAARGASRA). R81 is modified (omega-N-methylarginine). Residues S122, S179, and S182 each carry the phosphoserine modification. Residue Y194 is modified to Phosphotyrosine. A disordered region spans residues 221–240 (SSSRAGGLDWPEATEGPPSR). S239 carries the phosphoserine modification. T249 carries the post-translational modification Phosphothreonine. R260 carries the omega-N-methylarginine modification. A phosphoserine mark is found at S282, S310, S311, and S328. The segment at 282 to 285 (SLSL) is required for interaction with SFN. The required for interaction with GSK3B stretch occupies residues 291-720 (LPDMRGLDSY…ADVLINIIAV (430 aa)). ARM repeat units follow at residues 302-345 (GHRT…HKCY), 348-387 (AAAKKQARSLQAVPRLVKLFNHANQEVQRHATGAMRNLVY), 390-429 (ADNKLALVEENGIFELLRALREQDDELRKNVTGILWNLSS), 446-484 (TDLVLSPLSGAGGPPLIQQNASEAEIFYNATGFLRNLSS), 488-533 (ATRQ…NLSY), 592-633 (PKGL…NITA), 641-680 (VLSRLALEQERILNPLLDRVRTADHHQLRSLTGLIRNLSR), and 685-726 (KDEM…NLVV). The required for binding to PKP2 mRNA stretch occupies residues 513 to 793 (VGKCEDKSVE…GYRKEDFLGP (281 aa)).

Belongs to the beta-catenin family. As to quaternary structure, found in a complex composed of CDH1, RAP1A and PKP3; PKP3 acts as a scaffold protein within the complex, the complex is required for CDH1 localization to mature desmosome cell junctions. Interacts with FXR1; the interaction facilitates the binding of PKP3 to PKP2 mRNA. Interacts (via ARM repeats) with GSK3B; the interaction may be involved in PKP3 protein degradation. Interacts with hyperphosphorylated and hypophosphorylated RB1; the interaction inhibits RB1 interaction with and repression of the transcription factor E2F1, potentially via sequestering RB1 to the cytoplasm. Interacts with CDKN1A; the interaction sequesters CDKN1A to the cytoplasm thereby repressing its role as an inhibitor of CDK4- and CDK6-driven RB1 phosphorylation. Interacts (via N-terminus) with SFN; the interaction maintains the cytoplasmic pool of PKP3, facilitates PKP3 exchange at desmosomes and restricts PKP3 localization to existing desmosome cell junctions. Interacts (via N-terminus) with SFN; the interaction maintains the cytoplasmic pool of PKP3 and restricts PKP3 localization to existing desmosome cell junctions. Interacts (via N-terminus) with JUP; the interaction is required for PKP3 localization to desmosome cell-cell junctions. In terms of processing, phosphorylated at Ser-282 when localized to the cytoplasm, PKP3 at desmosome cell junctions is not phosphorylated. Phosphorylation at Try-194 by SRC is induced by reactive oxygen species and potentially acts as a release mechanism from desmosome cell-cell junctions.

Its subcellular location is the nucleus. It localises to the cell junction. The protein resides in the desmosome. The protein localises to the cytoplasm. It is found in the cell membrane. Its subcellular location is the adherens junction. Functionally, a component of desmosome cell-cell junctions which are required for positive regulation of cellular adhesion. Required for the localization of DSG2, DSP and PKP2 to mature desmosome junctions. May also play a role in the maintenance of DSG3 protein abundance in keratinocytes. Required for the formation of DSP-containing desmosome precursors in the cytoplasm during desmosome assembly. Also regulates the accumulation of CDH1 to mature desmosome junctions, via cAMP-dependent signaling and its interaction with activated RAP1A. Positively regulates the stabilization of PKP2 mRNA and therefore protein abundance, via its interaction with FXR1, may also regulate the protein abundance of DSP via the same mechanism. May also regulate the protein abundance of the desmosome component PKP1. Required for the organization of desmosome junctions at intercellular borders between basal keratinocytes of the epidermis, as a result plays a role in maintenance of the dermal barrier and regulation of the dermal inflammatory response. Required during epidermal keratinocyte differentiation for cell adherence at tricellular cell-cell contacts, via regulation of the timely formation of adherens junctions and desmosomes in a calcium-dependent manner, and may also play a role in the organization of the intracellular actin fiber belt. Acts as a negative regulator of the inflammatory response in hematopoietic cells of the skin and intestine, via modulation of proinflammatory cytokine production. Important for epithelial barrier maintenance in the intestine to reduce intestinal permeability, thereby plays a role in protection from intestinal-derived endotoxemia. Required for the development of hair follicles, via a role in the regulation of inner root sheaf length, correct alignment and anterior-posterior polarity of hair follicles. Promotes proliferation and cell-cycle G1/S phase transition of keratinocytes. Promotes E2F1-driven transcription of G1/S phase promoting genes by acting to release E2F1 from its inhibitory interaction with RB1, via sequestering RB1 and CDKN1A to the cytoplasm and thereby increasing CDK4- and CDK6-driven phosphorylation of RB1. May act as a scaffold protein to facilitate MAPK phosphorylation of RPS6KA protein family members and subsequently promote downstream EGFR signaling. May play a role in the positive regulation of transcription of Wnt-mediated TCF-responsive target genes. The protein is Plakophilin-3 (PKP3) of Bos taurus (Bovine).